The following is a 348-amino-acid chain: Tetraacyldisaccharide 4'-kinase (348 aa).

Residue 54-61 (TVGGAGKT) participates in ATP binding.

This sequence belongs to the LpxK family.

It catalyses the reaction a lipid A disaccharide + ATP = a lipid IVA + ADP + H(+). It participates in glycolipid biosynthesis; lipid IV(A) biosynthesis; lipid IV(A) from (3R)-3-hydroxytetradecanoyl-[acyl-carrier-protein] and UDP-N-acetyl-alpha-D-glucosamine: step 6/6. Its function is as follows. Transfers the gamma-phosphate of ATP to the 4'-position of a tetraacyldisaccharide 1-phosphate intermediate (termed DS-1-P) to form tetraacyldisaccharide 1,4'-bis-phosphate (lipid IVA). This chain is Tetraacyldisaccharide 4'-kinase, found in Agrobacterium fabrum (strain C58 / ATCC 33970) (Agrobacterium tumefaciens (strain C58)).